We begin with the raw amino-acid sequence, 469 residues long: 3-isopropylmalate dehydratase large subunit (469 aa).

3 residues coordinate [4Fe-4S] cluster: Cys349, Cys410, and Cys413.

Belongs to the aconitase/IPM isomerase family. LeuC type 1 subfamily. Heterodimer of LeuC and LeuD. Requires [4Fe-4S] cluster as cofactor.

The enzyme catalyses (2R,3S)-3-isopropylmalate = (2S)-2-isopropylmalate. It functions in the pathway amino-acid biosynthesis; L-leucine biosynthesis; L-leucine from 3-methyl-2-oxobutanoate: step 2/4. In terms of biological role, catalyzes the isomerization between 2-isopropylmalate and 3-isopropylmalate, via the formation of 2-isopropylmaleate. In Neisseria meningitidis serogroup C (strain 053442), this protein is 3-isopropylmalate dehydratase large subunit.